The sequence spans 367 residues: MLNYKKWTQPPNSLIKSIKASRAAYRRLGNSGLLVSNPILGGMHIGDPRWYDWVLDEKDSIALLKAAYDRGINTWDTANIYSNGESERIMGRALRSHNIPRSKVVIMTKCFRAVTDPDVDGDIGSSTAFFPDLTRQSKDYVNHCGLSRASVFQQVEASLRRLNTDYIDVLHIHRFDHHVPPEETMKALHDLVQMNKVRYLGASSMWAHEFAILQHTAEKNNWTKFVSMQNHYNLLYREEEREMIKYCNLTGVGLIPWGPLAAGKLARPPDGKASTFRAINGGAYKDHNPAESEQIARRVHQIAVSRGVPMSHVALAWLNKRVVSPVIGLSSVERMDEVLDARALELSDEEESRLEDPYKAQPPQGHS.

D76 contributes to the NADP(+) binding site. The active-site Proton donor is Y81. H173 serves as a coordination point for substrate. NADP(+) contacts are provided by residues 203 to 204 (SS), Q229, 258 to 268 (GPLAAGKLARP), and 330 to 338 (SSVERMDEV). A disordered region spans residues 346-367 (LSDEEESRLEDPYKAQPPQGHS).

It belongs to the aldo/keto reductase family.

The protein operates within mycotoxin biosynthesis. Functionally, aldo-keto reductase; part of the gene clusters that mediate the biosynthesis of AM-toxins, host-selective toxins (HSTs) causing Alternaria blotch on apple, a worldwide distributed disease. AM-toxins are cyclic depsipeptides containing the 3 residues 2-hydroxy-isovaleric acid (2-HIV), dehydroalanine, L-alanine which are common for all 3 AM-toxins I to III. The fourth precursor is L-alpha-amino-methoxyphenyl-valeric acid (L-Amv) for AM-toxin I, L-alpha-amino-phenyl-valeric acid (L-Apv) for AM-toxin II, and L-alpha-amino-hydroxyphenyl-valeric acid (L-Ahv) for AM-toxin III. AM-toxins have two target sites for affecting susceptible apple cells; they cause invagination of the plasma membrane and electrolyte loss and chloroplast disorganization. The non-ribosomal peptide synthetase AMT1 contains 4 catalytic modules and is responsible for activation of each residue in AM-toxin. The aldo-keto reductase AMT2 catalyzes the conversion of 2-keto-isovaleric acid (2-KIV) to 2-hydroxy-isovaleric acid (2-HIV), one of the precursor residues incorporated by AMT1 during AM-toxin biosynthesis, by reduction of its ketone to an alcohol. The cytochrome P450 monooxygenase AMT3 and the thioesterase AMT4 are also important for AM-toxin production, but their exact function within the AM-toxin biosynthesis are not known yet. Up to 21 proteins (including AMT1 to AMT4) are predicted to be involved in AM-toxin biosynthesis since their expression ishighly up-regulated in AM-toxin-producing cultures. The chain is Aldo-keto reductase AMT2 from Alternaria alternata (Alternaria rot fungus).